The primary structure comprises 248 residues: mRNA-decapping protein OPG122 (248 aa).

Residues 45–227 (HKRVSVSAIL…IAKYALDTAK (183 aa)) form the Nudix hydrolase domain. Positions 125–147 (GGILKRGENVPECLSREIKEEVN) match the Nudix box motif. Glutamate 132 lines the Mg(2+) pocket. Glutamate 141 acts as the Nucleophile in catalysis. Glutamate 145 provides a ligand contact to Mn(2+). Residue aspartate 167 participates in Mg(2+) binding.

This sequence belongs to the Nudix hydrolase family. The cofactor is Mg(2+). It depends on Mn(2+) as a cofactor.

It is found in the host mitochondrion. Functionally, decapping enzyme that remove the protective 5'-cap from both host and viral mRNAs to commit transcripts for decay by the cellular exonuclease XRN1. Preferentially targets spliced mRNAs and since all viral genes are intronless, it preferentially targets host over viral transcripts. Acceleration of the turnover of cellular transcripts promotes the shutoff of host protein synthesis and therefore diminish the magnitude of antiviral response. The sequence is that of mRNA-decapping protein OPG122 (OPG122) from Variola virus (isolate Human/India/Ind3/1967) (VARV).